Consider the following 448-residue polypeptide: Trk system potassium uptake protein TrkA homolog 1 (448 aa).

The 124-residue stretch at 1 to 124 (MKAVIIGAGE…RAQVGVDLMI (124 aa)) folds into the RCK N-terminal 1 domain. NAD(+) is bound by residues 7 to 11 (GAGEV), aspartate 29, 70 to 71 (TG), and arginine 101. The region spanning 144–225 (IDAEMFAEGK…MEDLESVFGS (82 aa)) is the RCK C-terminal 1 domain. The region spanning 230-348 (RTRILLIGCG…FEMVGIDMAV (119 aa)) is the RCK N-terminal 2 domain. Position 232–262 (232–262 (RILLIGCGIVGMYLAKLIDKEENADLRIIEH)) interacts with NAD(+). Residues 368 to 448 (QTLTTIEGER…AASEVEKYFK (81 aa)) enclose the RCK C-terminal 2 domain.

Functionally, part of a potassium transport system. The sequence is that of Trk system potassium uptake protein TrkA homolog 1 (trkA1) from Methanosarcina mazei (strain ATCC BAA-159 / DSM 3647 / Goe1 / Go1 / JCM 11833 / OCM 88) (Methanosarcina frisia).